Consider the following 570-residue polypeptide: Sulfite reductase [NADPH] hemoprotein beta-component (570 aa).

4 residues coordinate [4Fe-4S] cluster: cysteine 434, cysteine 440, cysteine 479, and cysteine 483. Siroheme is bound at residue cysteine 483.

The protein belongs to the nitrite and sulfite reductase 4Fe-4S domain family. Alpha(8)-beta(8). The alpha component is a flavoprotein, the beta component is a hemoprotein. Requires siroheme as cofactor. It depends on [4Fe-4S] cluster as a cofactor.

It catalyses the reaction hydrogen sulfide + 3 NADP(+) + 3 H2O = sulfite + 3 NADPH + 4 H(+). Its pathway is sulfur metabolism; hydrogen sulfide biosynthesis; hydrogen sulfide from sulfite (NADPH route): step 1/1. In terms of biological role, component of the sulfite reductase complex that catalyzes the 6-electron reduction of sulfite to sulfide. This is one of several activities required for the biosynthesis of L-cysteine from sulfate. The protein is Sulfite reductase [NADPH] hemoprotein beta-component of Salmonella typhi.